The sequence spans 135 residues: FK506-binding protein 2 (135 aa).

A signal peptide spans 1-17 (MLLKSLFLLFLTAIAFA). A PPIase FKBP-type domain is found at 40-127 (GDLISVHYEG…VFVAELVDIA (88 aa)). The short motif at 132–135 (HDEL) is the Prevents secretion from ER element.

It belongs to the FKBP-type PPIase family. FKBP2 subfamily.

The protein localises to the endoplasmic reticulum. It catalyses the reaction [protein]-peptidylproline (omega=180) = [protein]-peptidylproline (omega=0). Its activity is regulated as follows. Inhibited by both FK506 and rapamycin. Its function is as follows. PPIases accelerate the folding of proteins. It catalyzes the cis-trans isomerization of proline imidic peptide bonds in oligopeptides. This chain is FK506-binding protein 2 (FPR2), found in Debaryomyces hansenii (strain ATCC 36239 / CBS 767 / BCRC 21394 / JCM 1990 / NBRC 0083 / IGC 2968) (Yeast).